The following is a 323-amino-acid chain: DNA-directed RNA polymerase subunit alpha (323 aa).

Positions 1-225 (MLDIAMPKIE…QYSQTIADFN (225 aa)) are alpha N-terminal domain (alpha-NTD). Residues 246-323 (IYDTPIEELD…SHAARAEIEG (78 aa)) are alpha C-terminal domain (alpha-CTD).

This sequence belongs to the RNA polymerase alpha chain family. As to quaternary structure, homodimer. The RNAP catalytic core consists of 2 alpha, 1 beta, 1 beta' and 1 omega subunit. When a sigma factor is associated with the core the holoenzyme is formed, which can initiate transcription.

The catalysed reaction is RNA(n) + a ribonucleoside 5'-triphosphate = RNA(n+1) + diphosphate. In terms of biological role, DNA-dependent RNA polymerase catalyzes the transcription of DNA into RNA using the four ribonucleoside triphosphates as substrates. This Roseiflexus sp. (strain RS-1) protein is DNA-directed RNA polymerase subunit alpha.